Reading from the N-terminus, the 239-residue chain is RBPJ-interacting and tubulin-associated protein 1 (239 aa).

The Nuclear export signal signature appears at Leu-12–Pro-24. 2 disordered regions span residues Ala-62 to Lys-97 and Leu-149 to Lys-239. The Nuclear localization signal signature appears at Gly-93–Ser-109. Positions Trp-129 to Ala-158 are interaction with RBPJ/RBPSUH. Polar residues-rich tracts occupy residues Leu-149–Lys-159 and Arg-203–Gly-221. The interval Ala-158–Lys-239 is interaction with tubulin.

The protein belongs to the RITA family. As to quaternary structure, interacts with rbpj/rbpsuh.

It is found in the cytoplasm. The protein localises to the nucleus. Functionally, tubulin-binding protein that acts as a negative regulator of Notch signaling pathway. Shuttles between the cytoplasm and the nucleus and mediates the nuclear export of rbpj/rbpsuh, thereby preventing the interaction between rbpj/rbpsuh and NICD product of Notch proteins (Notch intracellular domain), leading to down-regulate Notch-mediated transcription. May play a role in neurogenesis. This Xenopus laevis (African clawed frog) protein is RBPJ-interacting and tubulin-associated protein 1 (rita1).